The chain runs to 117 residues: Small nuclear ribonucleoprotein Sm D1 (117 aa).

The 73-residue stretch at 2 to 74 (KLVRFLMKLT…IRYYILPDSL (73 aa)) folds into the Sm domain. Positions 81 to 117 (IDDSTKPKQKKKEVVRGRGRGRGRGTRGRGRGASRGF) are disordered. The span at 87-117 (PKQKKKEVVRGRGRGRGRGTRGRGRGASRGF) shows a compositional bias: basic residues.

The protein belongs to the snRNP core protein family. As to quaternary structure, belongs to the 40S cdc5-associated complex (or cwf complex), a spliceosome sub-complex reminiscent of a late-stage spliceosome composed of the U2, U5 and U6 snRNAs and at least brr2, cdc5, cwf2/prp3, cwf3/syf1, cwf4/syf3, cwf5/ecm2, spp42/cwf6, cwf7/spf27, cwf8, cwf9, cwf10, cwf11, cwf12, prp45/cwf13, cwf14, cwf15, cwf16, cwf17, cwf18, cwf19, cwf20, cwf21, cwf22, cwf23, cwf24, cwf25, cwf26, cyp7/cwf27, cwf28, cwf29/ist3, lea1, msl1, prp5/cwf1, prp10, prp12/sap130, prp17, prp22, sap61, sap62, sap114, sap145, slu7, smb1, smd1, smd3, smf1, smg1 and syf2. Interacts with saf5; the interaction is direct.

The protein localises to the nucleus. Its subcellular location is the cytoplasm. Functionally, plays a role in pre-mRNA splicing as a core component of the spliceosomal U1, U2, U4 and U5 small nuclear ribonucleoproteins (snRNPs), the building blocks of the spliceosome. The polypeptide is Small nuclear ribonucleoprotein Sm D1 (smd1) (Schizosaccharomyces pombe (strain 972 / ATCC 24843) (Fission yeast)).